The following is a 276-amino-acid chain: Acyl-[acyl-carrier-protein]--UDP-N-acetylglucosamine O-acyltransferase (276 aa).

The protein belongs to the transferase hexapeptide repeat family. LpxA subfamily. In terms of assembly, homotrimer.

It localises to the cytoplasm. It carries out the reaction a (3R)-hydroxyacyl-[ACP] + UDP-N-acetyl-alpha-D-glucosamine = a UDP-3-O-[(3R)-3-hydroxyacyl]-N-acetyl-alpha-D-glucosamine + holo-[ACP]. It functions in the pathway glycolipid biosynthesis; lipid IV(A) biosynthesis; lipid IV(A) from (3R)-3-hydroxytetradecanoyl-[acyl-carrier-protein] and UDP-N-acetyl-alpha-D-glucosamine: step 1/6. Functionally, involved in the biosynthesis of lipid A, a phosphorylated glycolipid that anchors the lipopolysaccharide to the outer membrane of the cell. This is Acyl-[acyl-carrier-protein]--UDP-N-acetylglucosamine O-acyltransferase from Gloeothece citriformis (strain PCC 7424) (Cyanothece sp. (strain PCC 7424)).